The sequence spans 423 residues: Amino sugar nitrososynthase RubN8 (423 aa).

The protein belongs to the acyl-CoA dehydrogenase family. The cofactor is FAD.

It participates in antibiotic biosynthesis. Functionally, nitrososynthase involved in the biosynthesis of rubradirin, an ansamycin antibiotic. In vitro, catalyzes the double-oxidation of TDP-L-epi-vancosamine to TDP-L-epi-vancosonitrose. In vivo, probably catalyzes the formation of D-rubranitrose, the nitro sugar moiety of rubradirin. In Streptomyces rubradiris (Streptomyces achromogenes subsp. rubradiris), this protein is Amino sugar nitrososynthase RubN8.